The sequence spans 293 residues: Elongation factor Ts (293 aa).

Residues 80 to 83 (TDFV) form an involved in Mg(2+) ion dislocation from EF-Tu region.

The protein belongs to the EF-Ts family.

The protein resides in the cytoplasm. Functionally, associates with the EF-Tu.GDP complex and induces the exchange of GDP to GTP. It remains bound to the aminoacyl-tRNA.EF-Tu.GTP complex up to the GTP hydrolysis stage on the ribosome. The sequence is that of Elongation factor Ts from Enterococcus faecalis (strain ATCC 700802 / V583).